A 343-amino-acid chain; its full sequence is UDP-3-O-acylglucosamine N-acyltransferase (343 aa).

The active-site Proton acceptor is the histidine 236.

Belongs to the transferase hexapeptide repeat family. LpxD subfamily. As to quaternary structure, homotrimer.

It catalyses the reaction a UDP-3-O-[(3R)-3-hydroxyacyl]-alpha-D-glucosamine + a (3R)-hydroxyacyl-[ACP] = a UDP-2-N,3-O-bis[(3R)-3-hydroxyacyl]-alpha-D-glucosamine + holo-[ACP] + H(+). It participates in bacterial outer membrane biogenesis; LPS lipid A biosynthesis. In terms of biological role, catalyzes the N-acylation of UDP-3-O-acylglucosamine using 3-hydroxyacyl-ACP as the acyl donor. Is involved in the biosynthesis of lipid A, a phosphorylated glycolipid that anchors the lipopolysaccharide to the outer membrane of the cell. The chain is UDP-3-O-acylglucosamine N-acyltransferase from Syntrophotalea carbinolica (strain DSM 2380 / NBRC 103641 / GraBd1) (Pelobacter carbinolicus).